We begin with the raw amino-acid sequence, 319 residues long: Mitochondrial fission regulator 1-like-A (319 aa).

Residues 1 to 37 (MASLGAAAEPERNLFGKDEAEAYESPEGRRSGRKKRT) are disordered. Residues 9-30 (EPERNLFGKDEAEAYESPEGRR) are compositionally biased toward basic and acidic residues.

It belongs to the MTFR1 family.

It localises to the mitochondrion outer membrane. In terms of biological role, mitochondrial protein required for adaptation of miochondrial dynamics to metabolic changes. Regulates mitochondrial morphology at steady state and mediates AMPK-dependent stress-induced mitochondrial fragmentation via the control of OPA1 levels. This Xenopus laevis (African clawed frog) protein is Mitochondrial fission regulator 1-like-A (mtfr1l-a).